Here is a 785-residue protein sequence, read N- to C-terminus: Disintegrin and metalloproteinase domain-containing protein B (785 aa).

Residues 1 to 26 form the signal peptide; sequence MRFLKSALPFVASALSLLSVQAAARS. Over 27–703 the chain is Extracellular; sequence QEPSAIQHVS…GSWVEQHKNL (677 aa). A Peptidase M12B domain is found at 279–507; that stretch reads KQVALVGIAA…NSVKSSCLSD (229 aa). N-linked (GlcNAc...) asparagine glycosylation is found at Asn-322, Asn-329, and Asn-355. Intrachain disulfides connect Cys-398/Cys-492 and Cys-446/Cys-464. His-429 lines the Zn(2+) pocket. Glu-430 is an active-site residue. Zn(2+)-binding residues include His-433 and His-439. The 90-residue stretch at 516–605 folds into the Disintegrin domain; sequence GSQCGNGIVE…TCPADSFKKD (90 aa). 3 N-linked (GlcNAc...) asparagine glycosylation sites follow: Asn-561, Asn-593, and Asn-640. A disulfide bridge connects residues Cys-577 and Cys-597. The chain crosses the membrane as a helical span at residues 704–724; that stretch reads VIGVACGVGGLLVLSILWCMI. Residues 725–785 are Cytoplasmic-facing; sequence NRCRRARTVV…GPYQSATRYA (61 aa). The segment at 737-785 is disordered; sequence PPMRPWPGPMPPPPPQMGQWAGPNRGYQGLRAEPPPPYPGPYQSATRYA. Residues 739 to 752 show a composition bias toward pro residues; sequence MRPWPGPMPPPPPQ.

It depends on Zn(2+) as a cofactor.

Its subcellular location is the membrane. Probable zinc protease. The protein is Disintegrin and metalloproteinase domain-containing protein B (ADM-B) of Aspergillus fumigatus (strain ATCC MYA-4609 / CBS 101355 / FGSC A1100 / Af293) (Neosartorya fumigata).